A 246-amino-acid chain; its full sequence is Adenosylcobinamide-GDP ribazoletransferase (246 aa).

The next 6 membrane-spanning stretches (helical) occupy residues 34 to 54 (IVTF…VALL), 59 to 79 (CGVP…TGGF), 113 to 133 (GGLA…ELLL), 136 to 156 (IHPI…AALL), 181 to 201 (TLVT…LQGL), and 203 to 223 (AALI…RTLG).

This sequence belongs to the CobS family. Mg(2+) serves as cofactor.

Its subcellular location is the cell inner membrane. The catalysed reaction is alpha-ribazole + adenosylcob(III)inamide-GDP = adenosylcob(III)alamin + GMP + H(+). It carries out the reaction alpha-ribazole 5'-phosphate + adenosylcob(III)inamide-GDP = adenosylcob(III)alamin 5'-phosphate + GMP + H(+). It participates in cofactor biosynthesis; adenosylcobalamin biosynthesis; adenosylcobalamin from cob(II)yrinate a,c-diamide: step 7/7. Its function is as follows. Joins adenosylcobinamide-GDP and alpha-ribazole to generate adenosylcobalamin (Ado-cobalamin). Also synthesizes adenosylcobalamin 5'-phosphate from adenosylcobinamide-GDP and alpha-ribazole 5'-phosphate. The sequence is that of Adenosylcobinamide-GDP ribazoletransferase from Klebsiella pneumoniae subsp. pneumoniae (strain ATCC 700721 / MGH 78578).